The following is a 478-amino-acid chain: Leukotoxin secretion protein D (478 aa).

Residues 1–77 (MKIWLSGIYE…LAVAIVLASV (77 aa)) are Cytoplasmic-facing. Residues 78–98 (SKVEIVATAPGKLTFSGRSKE) form a helical membrane-spanning segment. Topologically, residues 99–478 (IKPIENTIVQ…ESVTESLRER (380 aa)) are periplasmic.

Belongs to the membrane fusion protein (MFP) (TC 8.A.1) family.

Its subcellular location is the cell inner membrane. Involved in the transport of the Leukotoxin. This is Leukotoxin secretion protein D (lktD) from Pasteurella haemolytica-like sp. (strain 5943B).